The primary structure comprises 127 residues: Large ribosomal subunit protein bL17 (127 aa).

It belongs to the bacterial ribosomal protein bL17 family. As to quaternary structure, part of the 50S ribosomal subunit. Contacts protein L32.

The protein is Large ribosomal subunit protein bL17 of Alcanivorax borkumensis (strain ATCC 700651 / DSM 11573 / NCIMB 13689 / SK2).